The chain runs to 316 residues: Ornithine carbamoyltransferase (316 aa).

Residues 59–62 (STRT), Gln-86, Arg-110, and 137–140 (HPCQ) contribute to the carbamoyl phosphate site. Residues Asn-168, Asp-232, and 236 to 237 (SM) each bind L-ornithine. Carbamoyl phosphate contacts are provided by residues 273–274 (CL) and Arg-301.

The protein belongs to the aspartate/ornithine carbamoyltransferase superfamily. OTCase family.

Its subcellular location is the cytoplasm. It carries out the reaction carbamoyl phosphate + L-ornithine = L-citrulline + phosphate + H(+). It participates in amino-acid degradation; L-arginine degradation via ADI pathway; carbamoyl phosphate from L-arginine: step 2/2. Functionally, reversibly catalyzes the transfer of the carbamoyl group from carbamoyl phosphate (CP) to the N(epsilon) atom of ornithine (ORN) to produce L-citrulline. This is Ornithine carbamoyltransferase from Listeria monocytogenes serotype 4a (strain HCC23).